The primary structure comprises 1246 residues: DNA-directed RNA polymerase subunit beta (1246 aa).

Positions 1171–1246 (IDDDAGEMSL…EFDGYNDFKA (76 aa)) are disordered. Composition is skewed to acidic residues over residues 1202-1223 (DEEEKDEDNDSEEALITEEDFE) and 1230-1240 (EYAEDDDEFDG).

It belongs to the RNA polymerase beta chain family. In terms of assembly, the RNAP catalytic core consists of 2 alpha, 1 beta, 1 beta' and 1 omega subunit. When a sigma factor is associated with the core the holoenzyme is formed, which can initiate transcription.

It catalyses the reaction RNA(n) + a ribonucleoside 5'-triphosphate = RNA(n+1) + diphosphate. DNA-dependent RNA polymerase catalyzes the transcription of DNA into RNA using the four ribonucleoside triphosphates as substrates. This is DNA-directed RNA polymerase subunit beta from Alkaliphilus metalliredigens (strain QYMF).